The sequence spans 317 residues: WD repeat-containing protein 82 (317 aa).

WD repeat units follow at residues 21 to 60 (ENTDKINAIDFAPNGEHLISCSEDDQIVIYDCEKGTQSRT), 107 to 146 (GHTKKVISLCISPVEDTFLSGSLDKTLRLWDLRSPNCQGL), 148 to 186 (HLSGRPIAAYDPEGLIFAAGVNSESIKLYDLRSFDKGPF), 194 to 233 (EKECDWTGLKFSRDGKTILISTNGSVIRLVDAFHGTPLQT), 238 to 278 (PNNK…KVSV), and 282 to 317 (DHPGPVQCVQFNPKYMMLASACTNMAFWLPTSEEGL).

The protein belongs to the WD repeat SWD2 family. In terms of assembly, component of the SET1 complex, composed at least of the catalytic subunit Set1, wds/WDR5, Wdr82, Rbbp5, ash2, Cfp1/CXXC1, hcf and Dpy-30L1. Interacts with male-specific lethal (MSL) histone acetyltransferase complex at least composed of mof, msl-1, msl-2 and msl-3. Interacts with su(sable).

The protein resides in the nucleus. Its function is as follows. Component of the SET1 complex that specifically di- and trimethylates 'Lys-4' of histone H3. Together with su(sable), part of a transcription termination checkpoint that promotes transcription termination of aberrant RNAs and their subsequent degradation by the nuclear exosome. This is WD repeat-containing protein 82 from Drosophila melanogaster (Fruit fly).